Consider the following 212-residue polypeptide: Small ribosomal subunit protein eS1 (212 aa).

Belongs to the eukaryotic ribosomal protein eS1 family.

The chain is Small ribosomal subunit protein eS1 from Staphylothermus marinus (strain ATCC 43588 / DSM 3639 / JCM 9404 / F1).